The primary structure comprises 341 residues: Putative ankyrin repeat protein FPV031 (341 aa).

5 ANK repeats span residues 23–55, 58–87, 92–124, 125–158, and 163–195; these read DRNS…FQET, DNLT…IINQ, CGNT…ITNN, DGFT…IRDN, and TGLT…YSTC.

The protein is Putative ankyrin repeat protein FPV031 (ANK3) of Fowlpox virus (strain NVSL) (FPV).